Here is a 143-residue protein sequence, read N- to C-terminus: AP-2 complex subunit sigma (143 aa).

Belongs to the adaptor complexes small subunit family. In terms of assembly, adaptor protein complex 2 (AP-2) is a heterotetramer composed of two large adaptins (alpha-type subunit apl3 and beta-type subunit apl1), a medium chain (mu-type subunit apm4) and a small adaptin (sigma-type subunit aps2).

It localises to the cell membrane. The protein localises to the membrane. It is found in the coated pit. Its function is as follows. Component of the adaptor complexes which link clathrin to receptors in coated vesicles. Clathrin-associated protein complexes are believed to interact with the cytoplasmic tails of membrane proteins, leading to their selection and concentration. This chain is AP-2 complex subunit sigma (aps2), found in Schizosaccharomyces pombe (strain 972 / ATCC 24843) (Fission yeast).